The chain runs to 65 residues: MVSVQINDNETIDKMLKRFKKKYERAGVLKEYRANAYFVKPSIDNRLKRSRSRRRAQRANEERNS.

This sequence belongs to the bacterial ribosomal protein bS21 family.

This chain is Small ribosomal subunit protein bS21, found in Chlorobium chlorochromatii (strain CaD3).